We begin with the raw amino-acid sequence, 388 residues long: GTPase Obg (388 aa).

The region spanning 1-159 (MKFVDEAVIR…RSLKLELLLL (159 aa)) is the Obg domain. One can recognise an OBG-type G domain in the interval 160 to 333 (ADVGLLGMPN…LALKLLDYIA (174 aa)). GTP-binding positions include 166–173 (GMPNAGKS), 191–195 (FTTLV), 213–216 (DIPG), 283–286 (NKTD), and 314–316 (SAY). Mg(2+)-binding residues include Ser173 and Thr193.

It belongs to the TRAFAC class OBG-HflX-like GTPase superfamily. OBG GTPase family. Monomer. Mg(2+) serves as cofactor.

The protein localises to the cytoplasm. Its function is as follows. An essential GTPase which binds GTP, GDP and possibly (p)ppGpp with moderate affinity, with high nucleotide exchange rates and a fairly low GTP hydrolysis rate. Plays a role in control of the cell cycle, stress response, ribosome biogenesis and in those bacteria that undergo differentiation, in morphogenesis control. The sequence is that of GTPase Obg from Shewanella putrefaciens (strain CN-32 / ATCC BAA-453).